Consider the following 168-residue polypeptide: Photosystem I assembly protein Ycf3 (168 aa).

TPR repeat units lie at residues 35-68, 72-105, and 120-153; these read AFTY…EIDP, SYIL…NPFL, and GEQA…TPGN.

Belongs to the Ycf3 family.

The protein resides in the plastid. It localises to the chloroplast thylakoid membrane. Essential for the assembly of the photosystem I (PSI) complex. May act as a chaperone-like factor to guide the assembly of the PSI subunits. The sequence is that of Photosystem I assembly protein Ycf3 from Gossypium barbadense (Sea Island cotton).